The primary structure comprises 568 residues: Proton-coupled zinc antiporter SLC30A9, mitochondrial (568 aa).

A mitochondrion-targeting transit peptide spans 1–67 (MLPGLAAAAA…IGTLSQVKLY (67 aa)). A run of 5 helical transmembrane segments spans residues 239–259 (VVMVAICINGLNCFFKFLAWI), 314–334 (GVGIFMMGAGLSWYHGVMGLL), 342–362 (LLWAYCILAGSLVSEGATLLV), 392–412 (VILLEDTAAVLGVIIAATCMG), and 424–444 (SLGSLGVGTLLGMVSAFLIYT). The LXXLL motif motif lies at 462 to 466 (LTELL).

Belongs to the cation diffusion facilitator (CDF) transporter (TC 2.A.4) family. SLC30A subfamily. Interacts with GRIP1, ESR1 and AR. Ubiquitously expressed in fetal and adult tissues and cancer cell lines.

Its subcellular location is the mitochondrion membrane. The protein localises to the nucleus. The protein resides in the endoplasmic reticulum. The catalysed reaction is Zn(2+)(in) + 2 H(+)(out) = Zn(2+)(out) + 2 H(+)(in). Mitochondrial proton-coupled zinc ion antiporter mediating the export of zinc from the mitochondria and involved in zinc homeostasis, zinc mobilization as well as mitochondrial morphology and health. In nucleus, functions as a secondary coactivator for nuclear receptors by cooperating with p160 coactivators subtypes. Plays a role in transcriptional activation of Wnt-responsive genes. The polypeptide is Proton-coupled zinc antiporter SLC30A9, mitochondrial (Homo sapiens (Human)).